Reading from the N-terminus, the 462-residue chain is MPREIITCQVGQCGNQIGMEFWKQLCMEHGINPEGILEEYAQNGEDRKDVFFYQADDEHYVPRAVLIDLEPRVINGIQKSPYASLYNPENIFISKHGGGAGNNWGRGYCDAEKVQEEIIEMIDREADGSDSLEGFVLTHSIAGGTGSGFGSYLLERLNDHYPKKLIQTYSVFPNENDVVVQPYNCLLSMKRLILNADCVVVLDNTALTSIAVDRLKLLQPTFPQINSIVSTVMAASTTTLRYPGYMNNDLVGLIASLVPTPRCHFLMTGYTPLSLIDQKVTSVRKTTVLDVMRRLLQTKNIMATGAIKKGAYMSILNIIQGDVDPTQVHKSLQRIRERKLANFIPWGPASIQVALSKKSPYMESGHKVSGLMLANHTGIRSIFKVIYDQYRTFRKRDAYMNIFKQTKIFEDNLDEFDSSDEVVKSLIEDSAAAEKMDYINWGNDDDDMGYDPRAPPNFSSMQ.

A GTP-binding site is contributed by 142-148 (AGGTGSG).

It belongs to the tubulin family.

The protein resides in the cytoplasm. It localises to the cytoskeleton. The protein localises to the microtubule organizing center. Its subcellular location is the centrosome. In terms of biological role, tubulin is the major constituent of microtubules. The gamma chain is found at microtubule organizing centers (MTOC) such as the spindle poles or the centrosome, suggesting that it is involved in the minus-end nucleation of microtubule assembly. The chain is Tubulin gamma-1 chain from Euplotes crassus.